The following is a 470-amino-acid chain: Phosphoribosylamine--glycine ligase (470 aa).

Positions 115–354 (KDFLKRIGVP…MAEISMAVVE (240 aa)) constitute an ATP-grasp domain. 142-203 (REKFNNGIVV…EERLRGIEVA (62 aa)) contributes to the ATP binding site. 2 residues coordinate Mg(2+): glutamate 324 and asparagine 326.

This sequence belongs to the GARS family. Requires Mg(2+) as cofactor. It depends on Mn(2+) as a cofactor.

The enzyme catalyses 5-phospho-beta-D-ribosylamine + glycine + ATP = N(1)-(5-phospho-beta-D-ribosyl)glycinamide + ADP + phosphate + H(+). The protein operates within purine metabolism; IMP biosynthesis via de novo pathway; N(1)-(5-phospho-D-ribosyl)glycinamide from 5-phospho-alpha-D-ribose 1-diphosphate: step 2/2. This chain is Phosphoribosylamine--glycine ligase (purD), found in Archaeoglobus fulgidus (strain ATCC 49558 / DSM 4304 / JCM 9628 / NBRC 100126 / VC-16).